The sequence spans 428 residues: 3-phosphoshikimate 1-carboxyvinyltransferase (428 aa).

3-phosphoshikimate contacts are provided by lysine 23, serine 24, and arginine 28. Lysine 23 is a phosphoenolpyruvate binding site. The phosphoenolpyruvate site is built by glycine 97 and arginine 125. Residues serine 170, serine 171, glutamine 172, serine 198, aspartate 314, asparagine 338, and lysine 342 each contribute to the 3-phosphoshikimate site. Position 172 (glutamine 172) interacts with phosphoenolpyruvate. Aspartate 314 (proton acceptor) is an active-site residue. Phosphoenolpyruvate-binding residues include arginine 346, arginine 388, and lysine 413.

This sequence belongs to the EPSP synthase family. Monomer.

The protein resides in the cytoplasm. The enzyme catalyses 3-phosphoshikimate + phosphoenolpyruvate = 5-O-(1-carboxyvinyl)-3-phosphoshikimate + phosphate. It participates in metabolic intermediate biosynthesis; chorismate biosynthesis; chorismate from D-erythrose 4-phosphate and phosphoenolpyruvate: step 6/7. Catalyzes the transfer of the enolpyruvyl moiety of phosphoenolpyruvate (PEP) to the 5-hydroxyl of shikimate-3-phosphate (S3P) to produce enolpyruvyl shikimate-3-phosphate and inorganic phosphate. The polypeptide is 3-phosphoshikimate 1-carboxyvinyltransferase (Baumannia cicadellinicola subsp. Homalodisca coagulata).